The chain runs to 252 residues: Phosphate import ATP-binding protein PstB (252 aa).

In terms of domain architecture, ABC transporter spans 6 to 247 (IDTRDVNFWY…PEKEATQNYI (242 aa)). 38 to 45 (GPSGCGKS) contributes to the ATP binding site.

It belongs to the ABC transporter superfamily. Phosphate importer (TC 3.A.1.7) family. As to quaternary structure, the complex is composed of two ATP-binding proteins (PstB), two transmembrane proteins (PstC and PstA) and a solute-binding protein (PstS).

It is found in the cell inner membrane. The catalysed reaction is phosphate(out) + ATP + H2O = ADP + 2 phosphate(in) + H(+). Functionally, part of the ABC transporter complex PstSACB involved in phosphate import. Responsible for energy coupling to the transport system. The sequence is that of Phosphate import ATP-binding protein PstB from Bacteroides thetaiotaomicron (strain ATCC 29148 / DSM 2079 / JCM 5827 / CCUG 10774 / NCTC 10582 / VPI-5482 / E50).